A 394-amino-acid polypeptide reads, in one-letter code: GDP-mannose transporter (394 aa).

Topologically, residues 1 to 56 are cytoplasmic; that stretch reads MSNKKNEDIEMRAVEGANDFGGEKDPFLGRNSPVLRPRGREPTASAYFGKLDNSPG. The chain crosses the membrane as a helical span at residues 57–77; that stretch reads ASIIAYCLSSISMTVVNKYVV. Topologically, residues 78–81 are lumenal; sequence SGES. A helical membrane pass occupies residues 82–102; sequence WNLNFFYLGVQSLVCTIAILL. Topologically, residues 103 to 122 are cytoplasmic; that stretch reads SRQTGLIKNLAPFDSNKAKR. The helical transmembrane segment at 123-145 threads the bilayer; sequence WFPVSLLLVSMIYTGANALQYLS. Residues 146–150 lie on the Lumenal side of the membrane; it reads VPVYT. A helical transmembrane segment spans residues 151–168; it reads IFKNLTIIVIAYGEVLWF. Topologically, residues 169 to 174 are cytoplasmic; the sequence is GGSVTP. A helical membrane pass occupies residues 175-199; sequence LMLLSFGLMVLSSVVAAWADIQAAI. The Lumenal segment spans residues 200–207; sequence DGVGHSAE. Residues 208 to 228 traverse the membrane as a helical segment; it reads TSAALATLNAGYAWMGLNVVC. The Cytoplasmic portion of the chain corresponds to 229 to 249; it reads TSSYLLGMRKVIKKMNFKDYD. A helical membrane pass occupies residues 250–270; sequence SMFYNNLLTIPVLVVCSLLVE. Over 271-288 the chain is Lumenal; it reads DWSSENLAKNFPIETRNK. The chain crosses the membrane as a helical span at residues 289 to 309; it reads LMVGMIYSGLAAIFISYCSAW. Over 310–317 the chain is Cytoplasmic; it reads CIRVTSST. The chain crosses the membrane as a helical span at residues 318-338; sequence TYSMVGALNKLPIAISGLIFF. Residues 339-341 are Lumenal-facing; sequence DAP. A helical transmembrane segment spans residues 342-362; the sequence is ITFGSITAIAVGFVSGLVFAW. Over 363 to 394 the chain is Cytoplasmic; the sequence is AKVRQKAQEAGLLPTTKPTMSASAQSNRDANS.

This sequence belongs to the TPT transporter family. SLC35D subfamily. In terms of assembly, homooligomer.

The protein resides in the golgi apparatus membrane. Its subcellular location is the cytoplasmic vesicle membrane. The protein localises to the endoplasmic reticulum membrane. Functionally, involved in the import of GDP-mannose from the cytoplasm into the Golgi lumen. In Chaetomium globosum (strain ATCC 6205 / CBS 148.51 / DSM 1962 / NBRC 6347 / NRRL 1970) (Soil fungus), this protein is GDP-mannose transporter (VRG4).